A 173-amino-acid polypeptide reads, in one-letter code: Acireductone dioxygenase (173 aa).

Residues 1 to 20 (MKVYEYDNSTEDQREDHDSG) form a disordered region. Fe(2+) contacts are provided by histidine 81, histidine 83, glutamate 87, and histidine 126. Ni(2+)-binding residues include histidine 81, histidine 83, glutamate 87, and histidine 126.

Belongs to the acireductone dioxygenase (ARD) family. It depends on Fe(2+) as a cofactor. Ni(2+) serves as cofactor.

The protein localises to the cytoplasm. It is found in the nucleus. It catalyses the reaction 1,2-dihydroxy-5-(methylsulfanyl)pent-1-en-3-one + O2 = 4-methylsulfanyl-2-oxobutanoate + formate + 2 H(+). It carries out the reaction 1,2-dihydroxy-5-(methylsulfanyl)pent-1-en-3-one + O2 = 3-(methylsulfanyl)propanoate + CO + formate + 2 H(+). The protein operates within amino-acid biosynthesis; L-methionine biosynthesis via salvage pathway; L-methionine from S-methyl-5-thio-alpha-D-ribose 1-phosphate: step 5/6. In terms of biological role, catalyzes 2 different reactions between oxygen and the acireductone 1,2-dihydroxy-3-keto-5-methylthiopentene (DHK-MTPene) depending upon the metal bound in the active site. Fe-containing acireductone dioxygenase (Fe-ARD) produces formate and 2-keto-4-methylthiobutyrate (KMTB), the alpha-ketoacid precursor of methionine in the methionine recycle pathway. Ni-containing acireductone dioxygenase (Ni-ARD) produces methylthiopropionate, carbon monoxide and formate, and does not lie on the methionine recycle pathway. In Tuber melanosporum (strain Mel28) (Perigord black truffle), this protein is Acireductone dioxygenase.